Consider the following 61-residue polypeptide: DNA-directed RNA polymerase subunit Rpo6 (61 aa).

This sequence belongs to the archaeal Rpo6/eukaryotic RPB6 RNA polymerase subunit family. In terms of assembly, part of the RNA polymerase complex.

It is found in the cytoplasm. It carries out the reaction RNA(n) + a ribonucleoside 5'-triphosphate = RNA(n+1) + diphosphate. DNA-dependent RNA polymerase (RNAP) catalyzes the transcription of DNA into RNA using the four ribonucleoside triphosphates as substrates. This chain is DNA-directed RNA polymerase subunit Rpo6, found in Thermoplasma acidophilum (strain ATCC 25905 / DSM 1728 / JCM 9062 / NBRC 15155 / AMRC-C165).